Consider the following 313-residue polypeptide: tRNA uridine(34) hydroxylase (313 aa).

One can recognise a Rhodanese domain in the interval 124-218 (SDPEVLLIDT…YLEEVPQEET (95 aa)). Cys-178 (cysteine persulfide intermediate) is an active-site residue.

This sequence belongs to the TrhO family.

The catalysed reaction is uridine(34) in tRNA + AH2 + O2 = 5-hydroxyuridine(34) in tRNA + A + H2O. Its function is as follows. Catalyzes oxygen-dependent 5-hydroxyuridine (ho5U) modification at position 34 in tRNAs. The protein is tRNA uridine(34) hydroxylase of Pseudomonas fluorescens (strain SBW25).